The chain runs to 290 residues: Short chain dehydrogenase/reductase nsrO (290 aa).

2 residues coordinate NADP(+): Ile37 and Lys149. Active-site proton donor residues include Ser168 and Tyr182. The NADP(+) site is built by Tyr182, Lys186, and Thr221. Lys186 serves as the catalytic Lowers pKa of active site Tyr.

It belongs to the short-chain dehydrogenases/reductases (SDR) family.

It functions in the pathway secondary metabolite biosynthesis. Its function is as follows. Short chain dehydrogenase/reductase; part of the gene cluster that mediates the biosynthesis of the tetrahydroxanthone dimer neosartorin, which exhibits antibacterial activity. The two different monomeric units appear to be synthesized by the same set of enzymes, among which the Baeyer-Villiger monooxygenase nsrF is the key enzyme for the divergence of the biosynthetic routes. The pathway begins with the synthesis of atrochrysone thioester by the polyketide synthase nsrB. The atrochrysone carboxyl ACP thioesterase nsrC then breaks the thioester bond and releases the atrochrysone carboxylic acid from AacuL. Atrochrysone carboxylic acid is decarboxylated by the decarboxylase nsrE, and oxidized by the anthrone oxygenase nsrD to yield emodin. Emodin is then reduced to emodin hydroquinone by the oxidoreductase nsrR. A-ring reduction by the short chain dehydrogenase nsrJ, dehydration by the scytalone dehydratase-like protein nsrI and probable spontaneous re-oxidation, results in overall deoxygenation to chrysophanol. The Baeyer-Villiger monooxygenase nsrF accepts chrysophanol as a substrate to insert one oxygen atom at two different positions to yield the precursors of both monomric units. NsrF is promiscuous/flexible in interacting with the 2 (non methylated and methylated) aromatic rings of chrysophanol, thus diverging the biosynthetic pathway at this point. After the hydrolysis of the lactones, methylesterification by the methyltransferase nsrG yields respectively moniliphenone and 2,2',6'-trihydroxy-4-methyl-6-methoxya-cyldiphenylmethanone. The next steps are the hydroxylation by the FAD-dependent monooxygenase nsrK, followed by isomerization by the monooxygenase nsrQ. The short chain dehydrogenase/reductase nsrO then catalyzes the C-5 ketoreduction to give the xanthone skeleton of blennolide C and 5-acetylblennolide A. The acetyltransferase nsrL has a strict substrate specificity and uses only blennolide A but not blennolide C to yield 5-acetylblennolide A as the single-acetylated product. In the final step of the biosynthesis, the heterodimerization of the 2 xanthones, blennolide C and 5-acetylblennolide A, is catalyzed by the cytochrome P450 monooxygenase nsrP. NsrP can utilize at least three different xanthones as its substrates to perform the dimerization reaction. In Aspergillus novofumigatus (strain IBT 16806), this protein is Short chain dehydrogenase/reductase nsrO.